The chain runs to 805 residues: Nitrite reductase [NAD(P)H] (805 aa).

43–79 (YNRILLSKVLQGDTDIKDITLNDWDWYEENNIQLYTN) serves as a coordination point for FAD. 193-223 (LQNELEKQGMTFLLEKQTEEIVGDDRVEGLR) serves as a coordination point for NADP(+). The [2Fe-2S] cluster site is built by Cys-418, Cys-420, Cys-453, and Cys-456. Residues Cys-635, Cys-641, Cys-675, and Cys-679 each coordinate [4Fe-4S] cluster. Cys-679 serves as a coordination point for siroheme.

Belongs to the nitrite and sulfite reductase 4Fe-4S domain family. Homodimer. Requires siroheme as cofactor. [2Fe-2S] cluster is required as a cofactor. The cofactor is [4Fe-4S] cluster. FAD serves as cofactor.

The catalysed reaction is NH4(+) + 3 NADP(+) + 2 H2O = nitrite + 3 NADPH + 5 H(+). It catalyses the reaction NH4(+) + 3 NAD(+) + 2 H2O = nitrite + 3 NADH + 5 H(+). It functions in the pathway nitrogen metabolism; nitrate reduction (assimilation). In terms of biological role, required for nitrite assimilation. In Bacillus subtilis (strain 168), this protein is Nitrite reductase [NAD(P)H] (nasD).